Consider the following 116-residue polypeptide: Ribosome-binding factor A (116 aa).

This sequence belongs to the RbfA family. Monomer. Binds 30S ribosomal subunits, but not 50S ribosomal subunits or 70S ribosomes.

The protein resides in the cytoplasm. One of several proteins that assist in the late maturation steps of the functional core of the 30S ribosomal subunit. Associates with free 30S ribosomal subunits (but not with 30S subunits that are part of 70S ribosomes or polysomes). Required for efficient processing of 16S rRNA. May interact with the 5'-terminal helix region of 16S rRNA. This chain is Ribosome-binding factor A, found in Mycoplasma pneumoniae (strain ATCC 29342 / M129 / Subtype 1) (Mycoplasmoides pneumoniae).